The sequence spans 802 residues: Epithelial sodium channel subunit delta (802 aa).

At 1–250 (MRAVLSQKTT…CSRGNRLKTT (250 aa)) the chain is on the cytoplasmic side. The segment at 145-211 (KQPHGGALTS…PPPPKEGHQE (67 aa)) is disordered. A compositionally biased stretch (basic residues) spans 166–176 (CHLKGWQHRPT). Pro residues predominate over residues 192–205 (PPRPGPPSAPPPPP). The chain crosses the membrane as a helical span at residues 251–271 (SWGLLSLGALVALCWQLGLLF). Topologically, residues 272 to 694 (ERHWHRPVLM…VPQLLSAMGS (423 aa)) are extracellular. Residues asparagine 330 and asparagine 548 are each glycosylated (N-linked (GlcNAc...) asparagine). The chain crosses the membrane as a helical span at residues 695-715 (LCSLWFGASVLSLLELLELLL). Topologically, residues 716–802 (DASALTLVLG…GPQPLETLDT (87 aa)) are cytoplasmic. Positions 738 to 777 (RASPASGASSIKPEASQMPPPAGGTSDDPEPSGPHLPRVM) are disordered.

The protein belongs to the amiloride-sensitive sodium channel (TC 1.A.6) family. SCNN1D subfamily. In terms of assembly, can form an alternative heterotrimeric epithelial sodium channel (ENaC), composed of a delta (SCNN1D), beta (SCNN1B), and gamma (SCNN1G) subunit, where the delta (SCNN1D) subunit replaces the alpha (SCNN1A) subunit. In terms of tissue distribution, not specifically expressed in epithelial cells.

It localises to the apical cell membrane. The catalysed reaction is Na(+)(in) = Na(+)(out). With respect to regulation, originally identified and characterized by its inhibition by the diuretic drug amiloride. Potential alternative pore-forming subunit of the epithelial sodium channel (ENaC), capable of replacing the alpha/SCNN1A subunit, creating a more active channel with distinct properties. ENaC functions in epithelial tissues, where it facilitates the electrodiffusion of sodium ions from the extracellular fluid through the apical membrane of cells, with water following osmotically, regulating sodium balance and fluid homeostasis. This subunit could also function independently as a sodium channel or assemble into other tissue-specific heterotrimeric sodium channels. Its function is as follows. ENaC channels including this isoform exhibit greater conductance. The chain is Epithelial sodium channel subunit delta from Homo sapiens (Human).